We begin with the raw amino-acid sequence, 85 residues long: Putative membrane protein insertion efficiency factor (85 aa).

Belongs to the UPF0161 family.

Its subcellular location is the cell membrane. Functionally, could be involved in insertion of integral membrane proteins into the membrane. The chain is Putative membrane protein insertion efficiency factor from Baumannia cicadellinicola subsp. Homalodisca coagulata.